Here is a 708-residue protein sequence, read N- to C-terminus: Homeobox-leucine zipper protein HDG10 (708 aa).

The interval Met-1–Ser-24 is disordered. Residues Asp-16–Asn-75 constitute a DNA-binding region (homeobox). The stretch at Leu-119–Ser-141 forms a coiled coil. A disordered region spans residues Gly-162–Ser-188. A compositionally biased stretch (polar residues) spans Thr-165–Ser-188. The 239-residue stretch at Ser-218–Leu-456 folds into the START domain.

It belongs to the HD-ZIP homeobox family. Class IV subfamily. As to quaternary structure, interacts with ANT, BBM and AIL1. Expressed in exclusively in anthers with highest levels in the tapetum and pollen grains.

It is found in the nucleus. Functionally, probable transcription factor. This Arabidopsis thaliana (Mouse-ear cress) protein is Homeobox-leucine zipper protein HDG10.